The following is a 439-amino-acid chain: L-tryptophan decarboxylase (439 aa).

This sequence belongs to the phosphatidylserine decarboxylase family.

It catalyses the reaction L-tryptophan + H(+) = tryptamine + CO2. The protein operates within secondary metabolite biosynthesis. In terms of biological role, L-tryptophan decarboxylase; part of the gene cluster that mediates the biosynthesis of psilocybin, a psychotropic tryptamine-derived natural product. The first step in the pathway is the decarboxylation of L-tryptophan to tryptamine by the decarboxylase psiD. PsiD does not decarboxylate phenylalanine, tyrosine, or 5-hydroxy- L -tryptophan (5-HTP). 4-hydroxy-L-tryptophan is accepted as substrate by psiD as well. The cytochrome P450 monooxygenase psiH then converts tryptamine to 4-hydroxytryptamine. The kinase psiK catalyzes the 4-O-phosphorylation step by converting 4-hydroxytryptamine into norbaeocystin. The methyltransferase psiM then catalyzes iterative methyl transfer to the amino group of norbaeocystin to yield psilocybin via a monomethylated intermediate, baeocystin. 4-hydroxy-6-methyl-l-tryptophancan also be converted the decarboxylase PsiD, kinase PsiK, and methyltransferase PsiM into respectively 6-methyl-norbaeocystin, 6-methylbaeocystin, and 6-methylpsilocybin. The polypeptide is L-tryptophan decarboxylase (Psilocybe cyanescens).